The following is a 130-amino-acid chain: Small ribosomal subunit protein uS11 (130 aa).

This sequence belongs to the universal ribosomal protein uS11 family. Part of the 30S ribosomal subunit. Interacts with proteins S7 and S18. Binds to IF-3.

Its function is as follows. Located on the platform of the 30S subunit, it bridges several disparate RNA helices of the 16S rRNA. Forms part of the Shine-Dalgarno cleft in the 70S ribosome. The sequence is that of Small ribosomal subunit protein uS11 from Alteromonas mediterranea (strain DSM 17117 / CIP 110805 / LMG 28347 / Deep ecotype).